The primary structure comprises 834 residues: Periplasmic nitrate reductase (834 aa).

A signal peptide (tat-type signal) is located at residues 1-29 (MNLTRREFAKANAAAIAAAAAGLPILVRA). One can recognise a 4Fe-4S Mo/W bis-MGD-type domain in the interval 41-97 (LVWNKAPCRFCGTGCSVMVATRDGQVVATHGDIKAEVNRGINCVKGYFLSKIMYGSD). [4Fe-4S] cluster contacts are provided by cysteine 48, cysteine 51, cysteine 55, and cysteine 83. Mo-bis(molybdopterin guanine dinucleotide)-binding positions include lysine 85, glutamine 152, asparagine 177, cysteine 181, 214–221 (WGSNMAEM), 245–249 (STFEH), 264–266 (QTD), methionine 375, glutamine 379, asparagine 485, 511–512 (SD), lysine 534, aspartate 561, and 721–730 (TGRVLEHWHT). A substrate-binding site is contributed by phenylalanine 797. Mo-bis(molybdopterin guanine dinucleotide)-binding residues include asparagine 805 and lysine 822.

It belongs to the prokaryotic molybdopterin-containing oxidoreductase family. NasA/NapA/NarB subfamily. As to quaternary structure, component of the periplasmic nitrate reductase NapAB complex composed of NapA and NapB. [4Fe-4S] cluster is required as a cofactor. The cofactor is Mo-bis(molybdopterin guanine dinucleotide). In terms of processing, predicted to be exported by the Tat system. The position of the signal peptide cleavage has not been experimentally proven.

The protein localises to the periplasm. It carries out the reaction 2 Fe(II)-[cytochrome] + nitrate + 2 H(+) = 2 Fe(III)-[cytochrome] + nitrite + H2O. In terms of biological role, catalytic subunit of the periplasmic nitrate reductase complex NapAB. Receives electrons from NapB and catalyzes the reduction of nitrate to nitrite. In Pseudomonas aeruginosa (strain UCBPP-PA14), this protein is Periplasmic nitrate reductase.